The primary structure comprises 342 residues: Ribosomal RNA small subunit methyltransferase C (342 aa).

It belongs to the methyltransferase superfamily. RsmC family. As to quaternary structure, monomer.

The protein localises to the cytoplasm. It carries out the reaction guanosine(1207) in 16S rRNA + S-adenosyl-L-methionine = N(2)-methylguanosine(1207) in 16S rRNA + S-adenosyl-L-homocysteine + H(+). Functionally, specifically methylates the guanine in position 1207 of 16S rRNA in the 30S particle. The protein is Ribosomal RNA small subunit methyltransferase C of Klebsiella pneumoniae subsp. pneumoniae (strain ATCC 700721 / MGH 78578).